The chain runs to 617 residues: Vacuolar protein sorting-associated protein 33B (617 aa).

N-acetylalanine is present on Ala-2.

It belongs to the STXBP/unc-18/SEC1 family. Interacts with RAB11A and VIPAS39. Interacts with RAB25. Associates with adapter protein complex 3 (AP-3), clathrin:AP-3 and clathrin:HGS complexes. As to quaternary structure, (Microbial infection) Interacts with M.tuberculosis PtpA. In terms of processing, phosphorylated on tyrosine residues. Post-translationally, (Microbial infection) Dephosphorylated by M.tuberculosis PtpA, which induces the reduction of host phagolysosome fusion in M.tuberculosis-infected macrophages. In terms of tissue distribution, ubiquitous; highly expressed in testis and low expression in the lung.

Its subcellular location is the late endosome membrane. The protein localises to the lysosome membrane. The protein resides in the early endosome. It localises to the cytoplasmic vesicle. It is found in the clathrin-coated vesicle. Its subcellular location is the recycling endosome. Functionally, may play a role in vesicle-mediated protein trafficking to lysosomal compartments and in membrane docking/fusion reactions of late endosomes/lysosomes. Required for proper trafficking and targeting of the collagen-modifying enzyme lysyl hydroxylase 3 (LH3) to intracellular collagen. Mediates phagolysosomal fusion in macrophages. Proposed to be involved in endosomal maturation implicating VIPAS39. In epithelial cells, the VPS33B:VIPAS39 complex may play a role in the apical recycling pathway and in the maintenance of the apical-basolateral polarity. Seems to be involved in the sorting of specific cargos from the trans-Golgi network to alpha-granule-destined multivesicular bodies (MVBs) promoting MVBs maturation in megakaryocytes. The polypeptide is Vacuolar protein sorting-associated protein 33B (VPS33B) (Homo sapiens (Human)).